Reading from the N-terminus, the 146-residue chain is MKLHELKPAAGSRKAPKRVGRGTGSGLGRNAGKGEKGQNARSGGGVRPGFEGGQMPLYRRLPKRGFTNIFAKTITAVNVDRLNIFEDGTEVTIDALIEKGIIKKVNDGVKILGNGELKKKLVVKVNKYSKSAAEKIEAAGGKAEVI.

The interval 1–54 (MKLHELKPAAGSRKAPKRVGRGTGSGLGRNAGKGEKGQNARSGGGVRPGFEGGQ) is disordered. 2 stretches are compositionally biased toward gly residues: residues 21–31 (RGTGSGLGRNA) and 42–52 (SGGGVRPGFEG).

It belongs to the universal ribosomal protein uL15 family. In terms of assembly, part of the 50S ribosomal subunit.

In terms of biological role, binds to the 23S rRNA. The protein is Large ribosomal subunit protein uL15 of Clostridium acetobutylicum (strain ATCC 824 / DSM 792 / JCM 1419 / IAM 19013 / LMG 5710 / NBRC 13948 / NRRL B-527 / VKM B-1787 / 2291 / W).